Here is a 573-residue protein sequence, read N- to C-terminus: 2-succinyl-5-enolpyruvyl-6-hydroxy-3-cyclohexene-1-carboxylate synthase (573 aa).

The protein belongs to the TPP enzyme family. MenD subfamily. In terms of assembly, homodimer. Mg(2+) is required as a cofactor. It depends on Mn(2+) as a cofactor. Thiamine diphosphate serves as cofactor.

It carries out the reaction isochorismate + 2-oxoglutarate + H(+) = 5-enolpyruvoyl-6-hydroxy-2-succinyl-cyclohex-3-ene-1-carboxylate + CO2. The protein operates within quinol/quinone metabolism; 1,4-dihydroxy-2-naphthoate biosynthesis; 1,4-dihydroxy-2-naphthoate from chorismate: step 2/7. Its pathway is quinol/quinone metabolism; menaquinone biosynthesis. Functionally, catalyzes the thiamine diphosphate-dependent decarboxylation of 2-oxoglutarate and the subsequent addition of the resulting succinic semialdehyde-thiamine pyrophosphate anion to isochorismate to yield 2-succinyl-5-enolpyruvyl-6-hydroxy-3-cyclohexene-1-carboxylate (SEPHCHC). The chain is 2-succinyl-5-enolpyruvyl-6-hydroxy-3-cyclohexene-1-carboxylate synthase from Shewanella baltica (strain OS155 / ATCC BAA-1091).